Reading from the N-terminus, the 321-residue chain is o-succinylbenzoate synthase (321 aa).

Lys-134 functions as the Proton donor in the catalytic mechanism. Residues Asp-162, Glu-191, and Asp-214 each coordinate Mg(2+). Lys-236 acts as the Proton acceptor in catalysis.

It belongs to the mandelate racemase/muconate lactonizing enzyme family. MenC type 1 subfamily. Requires a divalent metal cation as cofactor.

The catalysed reaction is (1R,6R)-6-hydroxy-2-succinyl-cyclohexa-2,4-diene-1-carboxylate = 2-succinylbenzoate + H2O. It functions in the pathway quinol/quinone metabolism; 1,4-dihydroxy-2-naphthoate biosynthesis; 1,4-dihydroxy-2-naphthoate from chorismate: step 4/7. It participates in quinol/quinone metabolism; menaquinone biosynthesis. Converts 2-succinyl-6-hydroxy-2,4-cyclohexadiene-1-carboxylate (SHCHC) to 2-succinylbenzoate (OSB). The chain is o-succinylbenzoate synthase from Enterobacter sp. (strain 638).